The chain runs to 497 residues: Sorting nexin-4 (497 aa).

The interval 1 to 59 is disordered; it reads MDQHDDFDSVSWRQDPESDISRPTTSGTDADESLEYNRDTNGKRRMSSVHEDPPQAGPL. Residues 35-53 are compositionally biased toward basic and acidic residues; that stretch reads EYNRDTNGKRRMSSVHEDP. A PX domain is found at 72–194; it reads VLECRVDSPL…IFLESPDWNA (123 aa). A 1,2-diacyl-sn-glycero-3-phospho-(1D-myo-inositol-3-phosphate) contacts are provided by Arg-115, Thr-117, Lys-141, and Arg-160. Coiled coils occupy residues 235–261 and 397–432; these read RRFIEVKEKADKLDEDLNHVEKIVARV and EQSRRERVRKLELRIDELTREVESAKTTSEMFDEEV.

This sequence belongs to the sorting nexin family.

It localises to the cytoplasm. The protein localises to the cytosol. Its subcellular location is the preautophagosomal structure membrane. The protein resides in the endosome membrane. Sorting nexin, involved in the separation or division of vacuoles throughout the entire life cycle of the cells. Involved in retrieval of late-Golgi SNAREs from post-Golgi endosomes to the trans-Golgi network, for cytoplasm to vacuole transport (Cvt), and autophagy of large cargos including mitophagy, pexophagy and glycophagy. This chain is Sorting nexin-4 (snx4), found in Aspergillus fumigatus (strain ATCC MYA-4609 / CBS 101355 / FGSC A1100 / Af293) (Neosartorya fumigata).